The primary structure comprises 244 residues: Probable proteasome subunit alpha type-1 (244 aa).

It belongs to the peptidase T1A family. In terms of assembly, the 26S proteasome consists of a 20S proteasome core and two 19S regulatory subunits. The 20S proteasome core is composed of 28 subunits that are arranged in four stacked rings, resulting in a barrel-shaped structure. The two end rings are each formed by seven alpha subunits, and the two central rings are each formed by seven beta subunits. The catalytic chamber with the active sites is on the inside of the barrel.

It is found in the cytoplasm. The protein localises to the nucleus. The proteasome is a multicatalytic proteinase complex which is characterized by its ability to cleave peptides with Arg, Phe, Tyr, Leu, and Glu adjacent to the leaving group at neutral or slightly basic pH. The proteasome has an ATP-dependent proteolytic activity. The chain is Probable proteasome subunit alpha type-1 from Schizosaccharomyces pombe (strain 972 / ATCC 24843) (Fission yeast).